The following is a 192-amino-acid chain: MSIQNEMPGYNDVYQLLNQQGVGLTPAEMHGLISGLLCGGNTDSSWQPLVHDLTNEGLAFGHELAQALRNMHSAISDSLDDDGFLFQLYLPEGDAVSVFDRADALAGWVNHFLLGLGVSQPKLDKVKDETGEAIDDLRNIAQLGYDEDEDQEELEMSLEEIIEYVRVAALLCHDTFARQQPTAPEVRKPTLH.

Belongs to the UPF0149 family.

In Klebsiella pneumoniae subsp. pneumoniae (strain ATCC 700721 / MGH 78578), this protein is UPF0149 protein KPN78578_32810.